A 420-amino-acid polypeptide reads, in one-letter code: D-tagatose-1,6-bisphosphate aldolase subunit GatZ (420 aa).

It belongs to the GatZ/KbaZ family. GatZ subfamily. Forms a complex with GatY.

Its pathway is carbohydrate metabolism; D-tagatose 6-phosphate degradation; D-glyceraldehyde 3-phosphate and glycerone phosphate from D-tagatose 6-phosphate: step 2/2. Functionally, component of the tagatose-1,6-bisphosphate aldolase GatYZ that is required for full activity and stability of the Y subunit. Could have a chaperone-like function for the proper and stable folding of GatY. When expressed alone, GatZ does not show any aldolase activity. Is involved in the catabolism of galactitol. In Escherichia coli O8 (strain IAI1), this protein is D-tagatose-1,6-bisphosphate aldolase subunit GatZ.